Consider the following 287-residue polypeptide: uncharacterized protein (287 aa).

Disordered stretches follow at residues 109-175 (QEES…SSQD), 203-223 (IPPP…SQPV), and 257-287 (KESE…SSEE). Over residues 110–136 (EESSSSLEEGIIEDPVVATPSPASAAP) the composition is skewed to low complexity. Residues 143 to 152 (RKEFKNEKWK) show a composition bias toward basic and acidic residues. The span at 153-162 (EKKKQGRRRN) shows a compositional bias: basic residues. The span at 273-287 (SLEEASVHDRISSEE) shows a compositional bias: basic and acidic residues.

It belongs to the chlamydial CPn_0623/CT_504/TC_0791 family.

This is an uncharacterized protein from Chlamydia muridarum (strain MoPn / Nigg).